The primary structure comprises 145 residues: Maximins 3/H9 type 1 (145 aa).

Residues 1-18 form the signal peptide; that stretch reads MNFKYIVAVSFLIASAYA. Propeptides lie at residues 19–43 and 74–124; these read RSVQNDEQSLSQRDVLEEEESLREI and RTAE…KEKR. An Isoleucine amide modification is found at I144.

This sequence belongs to the bombinin family. Expressed by the skin glands.

Its subcellular location is the secreted. In terms of biological role, maximin-3 shows antibacterial activity against both Gram-positive and Gram-negative bacteria. It also shows antimicrobial activity against the fungus C.albicans, but not against A.flavus nor P.uticale. It has little hemolytic activity. It possess a significant cytotoxicity against tumor cell lines. It possess a significant anti-HIV activity. It shows high spermicidal activity. Maximin-H9 shows antimicrobial activity against bacteria and against the fungus C.albicans. Shows strong hemolytic activity. This Bombina maxima (Giant fire-bellied toad) protein is Maximins 3/H9 type 1.